We begin with the raw amino-acid sequence, 102 residues long: Large ribosomal subunit protein bL21 (102 aa).

It belongs to the bacterial ribosomal protein bL21 family. In terms of assembly, part of the 50S ribosomal subunit. Contacts protein L20.

Its function is as follows. This protein binds to 23S rRNA in the presence of protein L20. The chain is Large ribosomal subunit protein bL21 from Ehrlichia ruminantium (strain Welgevonden).